The following is a 374-amino-acid chain: 8-amino-7-oxononanoate synthase (374 aa).

2 residues coordinate substrate: Arg22 and Arg29. 109-110 (GY) provides a ligand contact to pyridoxal 5'-phosphate. Residue His134 participates in substrate binding. Residues Ser182, 207 to 210 (DDAH), and 227 to 230 (TLSK) each bind pyridoxal 5'-phosphate. At Lys230 the chain carries N6-(pyridoxal phosphate)lysine. Position 339 (Thr339) interacts with substrate.

Belongs to the class-II pyridoxal-phosphate-dependent aminotransferase family. BioF subfamily. In terms of assembly, homodimer. It depends on pyridoxal 5'-phosphate as a cofactor.

It catalyses the reaction 6-carboxyhexanoyl-[ACP] + L-alanine + H(+) = (8S)-8-amino-7-oxononanoate + holo-[ACP] + CO2. The protein operates within cofactor biosynthesis; biotin biosynthesis. Catalyzes the decarboxylative condensation of pimeloyl-[acyl-carrier protein] and L-alanine to produce 8-amino-7-oxononanoate (AON), [acyl-carrier protein], and carbon dioxide. This chain is 8-amino-7-oxononanoate synthase, found in Methylobacterium radiotolerans (strain ATCC 27329 / DSM 1819 / JCM 2831 / NBRC 15690 / NCIMB 10815 / 0-1).